Reading from the N-terminus, the 143-residue chain is D-aminoacyl-tRNA deacylase (143 aa).

A Gly-cisPro motif, important for rejection of L-amino acids motif is present at residues 135-136 (GP).

The protein belongs to the DTD family. In terms of assembly, homodimer.

Its subcellular location is the cytoplasm. It carries out the reaction glycyl-tRNA(Ala) + H2O = tRNA(Ala) + glycine + H(+). It catalyses the reaction a D-aminoacyl-tRNA + H2O = a tRNA + a D-alpha-amino acid + H(+). An aminoacyl-tRNA editing enzyme that deacylates mischarged D-aminoacyl-tRNAs. Also deacylates mischarged glycyl-tRNA(Ala), protecting cells against glycine mischarging by AlaRS. Acts via tRNA-based rather than protein-based catalysis; rejects L-amino acids rather than detecting D-amino acids in the active site. By recycling D-aminoacyl-tRNA to D-amino acids and free tRNA molecules, this enzyme counteracts the toxicity associated with the formation of D-aminoacyl-tRNA entities in vivo and helps enforce protein L-homochirality. This is D-aminoacyl-tRNA deacylase from Mycobacterium avium (strain 104).